Reading from the N-terminus, the 390-residue chain is 3-ketosteroid-9-alpha-monooxygenase, oxygenase component (390 aa).

Positions 32-134 (WHCLGLLRDF…TLERNGQLYV (103 aa)) constitute a Rieske domain. [2Fe-2S] cluster is bound by residues Cys-73, His-75, Cys-92, and His-95. Residues Asn-181, His-187, His-192, and Asp-311 each contribute to the Fe cation site.

In terms of assembly, homotrimer. The two-component system 3-ketosteroid-9-alpha-monooxygenase is composed of an oxygenase component KshA and a reductase component KshB. The cofactor is [2Fe-2S] cluster. Fe cation serves as cofactor.

The enzyme catalyses androsta-1,4-diene-3,17-dione + 2 reduced [2Fe-2S]-[ferredoxin] + O2 + 2 H(+) = 9alpha-hydroxyandrosta-1,4-diene-3,17-dione + 2 oxidized [2Fe-2S]-[ferredoxin] + H2O. It participates in steroid metabolism; cholesterol degradation. Probably involved in the degradation of cholesterol. In vitro, catalyzes the introduction of a 9alpha-hydroxyl moiety into the ring B of 3-ketosteroid substrates such as 1,4-androstadiene-3,17-dione (ADD), 4-androstene-3,17-dione (AD), 4-androstene-17beta-ol-3-one (testosterone), 4-pregnene-3,20-dione (progesterone), 19-nor-4-androstene-3,17-dione, 1-(5alpha)-androstene-3,17-dione, 5alpha-androstane-3,17-dione, 5beta-androstane-3,17-dione, 5alpha-androstane-17beta-ol-3-one (stanolon), 11beta-hydrocortisone, 3-oxo-23,24-bisnorcholesta-4-en-22-oate (4-BNC), 23,24-bisnorcholesta-4-ene-22-oate, 3-oxo-23,24-bisnorcholesta-1,4-dien-22-oate (1,4-BNC) and 3-oxo-23,24-bisnorcholesta-1,4-dien-22-oyl-coenzyme A thioester (1,4-BNC-CoA). KshA5 has the broadest substrate range without a clear substrate preference and is active with Delta-4, Delta-1,4, 5alpha-H and 5beta-H steroids, as well as with steroids having bulky aliphatic side chains and an isopropionyl side chain at C17. The polypeptide is 3-ketosteroid-9-alpha-monooxygenase, oxygenase component (Rhodococcus rhodochrous).